We begin with the raw amino-acid sequence, 216 residues long: Maintenance of carboxysome distribution protein A (216 aa).

ATP-binding residues include Gly-18, Gly-19, Gly-21, Lys-22, Thr-23, Thr-24, and Gln-47. Thr-23 lines the Mg(2+) pocket.

Belongs to the ParA family. McdA subfamily. In terms of assembly, homodimerizes in the presence of ATP. Each subunit binds 1 ATP molecule; some residues cross the dimer interface to contact ATP in the other subunit. Forms a complex with McdB.

It is found in the cytoplasm. Its subcellular location is the nucleoid. The enzyme catalyses ATP + H2O = ADP + phosphate + H(+). Functionally, mcdA and McdB together mediate carboxysome (Cb) spacing, size, ultrastructure and probably inheritance in the cell, together they prevent Cb aggregation. McdA is an ATPase that forms dynamic gradients on the nucleoid in response to adapter protein McdB, which associates with carboxysomes. The interplay between McdA gradients on the nucleoid and McdB-bound carboxysomes result in the equal spacing of Cbs along the cell length. Incorrect positioning (aggregation) of carboxysomes results in reduced CO(2) fixation by encapsulated ribulose-1,5-bisphosphate carboxylase (RuBisCO, cbbL/cbbS), which leads to slower growth. In Gloeobacter kilaueensis (strain ATCC BAA-2537 / CCAP 1431/1 / ULC 316 / JS1), this protein is Maintenance of carboxysome distribution protein A.